A 387-amino-acid polypeptide reads, in one-letter code: Patatin group J-1 (387 aa).

The signal sequence occupies residues M1–A23. The 199-residue stretch at L32–L230 folds into the PNPLA domain. Positions G36–G41 match the GXGXXG motif. The short motif at G75 to G79 is the GXSXG element. S77 (nucleophile) is an active-site residue. N115 is a glycosylation site (N-linked (GlcNAc...) asparagine). Catalysis depends on D216, which acts as the Proton acceptor. The DGA/G signature appears at D216 to G218. A coiled-coil region spans residues E322–A385.

The protein belongs to the patatin family. Tuber.

It is found in the vacuole. Functionally, probable lipolytic acyl hydrolase (LAH), an activity which is thought to be involved in the response of tubers to pathogens. The chain is Patatin group J-1 from Solanum tuberosum (Potato).